Reading from the N-terminus, the 148-residue chain is Multiprotein-bridging factor 1c (148 aa).

An HTH cro/C1-type domain is found at 91 to 145 (IQKARLEKKMSQADLAKQINERTQVVQEYENGKAVPNQAVLAKMEKVLGVKLRGK). The H-T-H motif DNA-binding region spans 102-121 (QADLAKQINERTQVVQEYEN).

This sequence belongs to the MBF1 family. As to quaternary structure, binds to TPS5. In terms of tissue distribution, expressed in leaves, roots, stems, flowers, siliques and shoots. Not detected in seeds.

It is found in the nucleus. The protein localises to the nucleolus. It localises to the cytoplasm. In terms of biological role, transcriptional coactivator that stimulates transcriptional activity by bridging regulatory proteins and TBP, thereby recruiting TBP to promoters occupied by DNA-binding regulators. Involved in the tolerance to heat and osmotic stress by partially activating the ethylene-response signal transduction pathway. The sequence is that of Multiprotein-bridging factor 1c (MBF1C) from Arabidopsis thaliana (Mouse-ear cress).